The primary structure comprises 216 residues: Histone doublet H4-H3 (216 aa).

The span at 1–12 (MSKAGKKVKAQQ) shows a compositional bias: basic residues. The segment at 1–23 (MSKAGKKVKAQQHGHLADHVSVG) is disordered.

The protein localises to the host nucleus. Its subcellular location is the host cytoplasm. It localises to the virion. Its function is as follows. Histone-like protein that is recruited to viral factories during viral replication and participates in viral DNA packaging and virion production probably by forming unstable nucleosome-like particles. May compact the viral DNA. This chain is Histone doublet H4-H3, found in Melbournevirus (MelV).